The primary structure comprises 259 residues: Emerin (259 aa).

M1 is modified (N-acetylmethionine). One can recognise an LEM domain in the interval 1–45 (MDDYAVLSDTELAAVLRQYNIPHGPIVGSTRKLYEKKIFEYETQR). A phosphoserine mark is found at S8, S29, S54, S72, S88, S99, S141, and S142. An interaction with F-actin region spans residues 46–223 (RRLLPPNSSS…PAAALGQDRQ (178 aa)). Phosphotyrosine is present on Y161. The segment at 168-187 (RPISNVSRSSLGLSYYPTSS) is interaction with CTNNB1. 3 positions are modified to phosphoserine: S171, S174, and S176. Residues 224–244 (VPLWGQLLLFLVFAAFLLFVY) form a helical membrane-spanning segment.

In terms of assembly, interacts with lamins A and C, BANF1, GMCL, BCLAF1 and YTHDC1/YT521. Interacts with TMEM43; the interaction retains emerin in the inner nuclear membrane. Interacts with ACTB, SPTAN1, F-actin, CTNNB1 and beta-tubulin. Interacts with SUN1 and SUN2. Interacts with TMEM201. Interacts with NEMP1. In terms of tissue distribution, in the ovary, highest expression is seen in primordial follicle oocytes (at protein level). Detected in embryonic fibroblasts, skeletal muscle, heart muscle and tongue epithelium (at protein level). Widely expressed.

It is found in the nucleus inner membrane. The protein resides in the nucleus outer membrane. Its function is as follows. Stabilizes and promotes the formation of a nuclear actin cortical network. Stimulates actin polymerization in vitro by binding and stabilizing the pointed end of growing filaments. Inhibits beta-catenin activity by preventing its accumulation in the nucleus. Acts by influencing the nuclear accumulation of beta-catenin through a CRM1-dependent export pathway. Links centrosomes to the nuclear envelope via a microtubule association. Required for proper localization of non-farnesylated prelamin-A/C. Together with NEMP1, contributes to nuclear envelope stiffness in germ cells. The sequence is that of Emerin (Emd) from Mus musculus (Mouse).